Consider the following 373-residue polypeptide: Dual-specificity RNA methyltransferase RlmN (373 aa).

Glu94 functions as the Proton acceptor in the catalytic mechanism. Residues 100–339 (EDDRATLCVS…VIVRKTRGDD (240 aa)) enclose the Radical SAM core domain. Cys107 and Cys344 are joined by a disulfide. Residues Cys114, Cys118, and Cys121 each contribute to the [4Fe-4S] cluster site. S-adenosyl-L-methionine-binding positions include 168-169 (GE), Ser200, 222-224 (SIH), and Asn301. Cys344 functions as the S-methylcysteine intermediate in the catalytic mechanism.

Belongs to the radical SAM superfamily. RlmN family. [4Fe-4S] cluster is required as a cofactor.

Its subcellular location is the cytoplasm. The enzyme catalyses adenosine(2503) in 23S rRNA + 2 reduced [2Fe-2S]-[ferredoxin] + 2 S-adenosyl-L-methionine = 2-methyladenosine(2503) in 23S rRNA + 5'-deoxyadenosine + L-methionine + 2 oxidized [2Fe-2S]-[ferredoxin] + S-adenosyl-L-homocysteine. It carries out the reaction adenosine(37) in tRNA + 2 reduced [2Fe-2S]-[ferredoxin] + 2 S-adenosyl-L-methionine = 2-methyladenosine(37) in tRNA + 5'-deoxyadenosine + L-methionine + 2 oxidized [2Fe-2S]-[ferredoxin] + S-adenosyl-L-homocysteine. Functionally, specifically methylates position 2 of adenine 2503 in 23S rRNA and position 2 of adenine 37 in tRNAs. m2A2503 modification seems to play a crucial role in the proofreading step occurring at the peptidyl transferase center and thus would serve to optimize ribosomal fidelity. The chain is Dual-specificity RNA methyltransferase RlmN from Shewanella putrefaciens (strain CN-32 / ATCC BAA-453).